A 239-amino-acid chain; its full sequence is Alpha-acetolactate decarboxylase (239 aa).

Belongs to the alpha-acetolactate decarboxylase family.

It catalyses the reaction (2S)-2-acetolactate + H(+) = (R)-acetoin + CO2. The protein operates within polyol metabolism; (R,R)-butane-2,3-diol biosynthesis; (R,R)-butane-2,3-diol from pyruvate: step 2/3. Its activity is regulated as follows. The enzyme is active only in the presence of branched-chain amino acids. Valine results in much higher activation than leucine or isoleucine. Its function is as follows. Converts acetolactate into acetoin. Regulates leucine and valine biosynthesis by diverting the flux of alpha-acetolactate towards acetoin when the branched-chain amino acids are present in high concentration. The sequence is that of Alpha-acetolactate decarboxylase (aldC) from Streptococcus thermophilus.